A 139-amino-acid chain; its full sequence is Putative pre-16S rRNA nuclease (139 aa).

This sequence belongs to the YqgF nuclease family.

The protein localises to the cytoplasm. Could be a nuclease involved in processing of the 5'-end of pre-16S rRNA. This chain is Putative pre-16S rRNA nuclease, found in Photorhabdus laumondii subsp. laumondii (strain DSM 15139 / CIP 105565 / TT01) (Photorhabdus luminescens subsp. laumondii).